The sequence spans 241 residues: Sensory transduction protein LytT (241 aa).

The 115-residue stretch at 3 to 117 folds into the Response regulatory domain; the sequence is RVLIVDDEML…RIQQTLKKYK (115 aa). Asp54 carries the 4-aspartylphosphate modification. The HTH LytTR-type domain maps to 137 to 241; it reads LALSVGESIV…AKELKKLLHI (105 aa).

Phosphorylated by LytS.

Its subcellular location is the cytoplasm. Its function is as follows. Member of the two-component regulatory system LytS/LytT that probably regulates genes involved in cell wall metabolism. This Bacillus subtilis (strain 168) protein is Sensory transduction protein LytT (lytT).